The sequence spans 470 residues: ATP synthase subunit beta (470 aa).

157–164 is a binding site for ATP; it reads GGAGVGKT.

It belongs to the ATPase alpha/beta chains family. In terms of assembly, F-type ATPases have 2 components, CF(1) - the catalytic core - and CF(0) - the membrane proton channel. CF(1) has five subunits: alpha(3), beta(3), gamma(1), delta(1), epsilon(1). CF(0) has three main subunits: a(1), b(2) and c(9-12). The alpha and beta chains form an alternating ring which encloses part of the gamma chain. CF(1) is attached to CF(0) by a central stalk formed by the gamma and epsilon chains, while a peripheral stalk is formed by the delta and b chains.

Its subcellular location is the cell inner membrane. It catalyses the reaction ATP + H2O + 4 H(+)(in) = ADP + phosphate + 5 H(+)(out). In terms of biological role, produces ATP from ADP in the presence of a proton gradient across the membrane. The catalytic sites are hosted primarily by the beta subunits. This chain is ATP synthase subunit beta, found in Geotalea uraniireducens (strain Rf4) (Geobacter uraniireducens).